A 373-amino-acid polypeptide reads, in one-letter code: Lipoyl amidotransferase LIPT1, mitochondrial (373 aa).

Residues 1-25 constitute a mitochondrion transit peptide; the sequence is MLIPLSMKNCFRLLCQHKVPAAGFK. The 187-residue stretch at 57–243 folds into the BPL/LPL catalytic domain; it reads LEGKPILFLW…EYAAHHQVDG (187 aa). Residues Y107, K151, K161, and T179 each contribute to the (R)-lipoyl-5'-AMP site.

The protein belongs to the LplA family.

It is found in the mitochondrion. It carries out the reaction (R)-lipoyl-5'-AMP + L-lysyl-[lipoyl-carrier protein] = N(6)-[(R)-lipoyl]-L-lysyl-[lipoyl-carrier protein] + AMP + 2 H(+). The catalysed reaction is N(6)-[(R)-lipoyl]-L-lysyl-[glycine-cleavage complex H protein] + L-lysyl-[lipoyl-carrier protein] = L-lysyl-[glycine-cleavage complex H protein] + N(6)-[(R)-lipoyl]-L-lysyl-[lipoyl-carrier protein]. It participates in protein modification; protein lipoylation via exogenous pathway; protein N(6)-(lipoyl)lysine from lipoate: step 2/2. Its function is as follows. Lipoyl amidotransferase that catalyzes the transfer of lipoyl moieties from lipoyl-protein H of the glycine cleavage system (lipoyl-GCSH) to E2 subunits of the pyruvate dehydrogenase complex (PDCE2). Unable to catalyze the transfer of octanoyl from octanoyl-GCSH to PDCE2. In vitro, it is also able to catalyze the transfer of the lipoyl group from lipoyl-AMP to the specific lysine residue of lipoyl domains of lipoate-dependent enzymes but this reaction may not be physiologically relevant. The polypeptide is Lipoyl amidotransferase LIPT1, mitochondrial (Mus musculus (Mouse)).